A 540-amino-acid chain; its full sequence is Chaperonin GroEL 1 (540 aa).

ATP contacts are provided by residues 30–33 (TLGP), lysine 51, 87–91 (DGTTT), glycine 415, 480–482 (NAA), and aspartate 496.

It belongs to the chaperonin (HSP60) family. As to quaternary structure, forms a cylinder of 14 subunits composed of two heptameric rings stacked back-to-back. Interacts with the co-chaperonin GroES.

Its subcellular location is the cytoplasm. The catalysed reaction is ATP + H2O + a folded polypeptide = ADP + phosphate + an unfolded polypeptide.. Its function is as follows. Together with its co-chaperonin GroES, plays an essential role in assisting protein folding. The GroEL-GroES system forms a nano-cage that allows encapsulation of the non-native substrate proteins and provides a physical environment optimized to promote and accelerate protein folding. The protein is Chaperonin GroEL 1 of Bradyrhizobium diazoefficiens (strain JCM 10833 / BCRC 13528 / IAM 13628 / NBRC 14792 / USDA 110).